Consider the following 338-residue polypeptide: Tetraacyldisaccharide 4'-kinase (338 aa).

63 to 70 (TVGGAGKT) lines the ATP pocket.

The protein belongs to the LpxK family.

The enzyme catalyses a lipid A disaccharide + ATP = a lipid IVA + ADP + H(+). Its pathway is glycolipid biosynthesis; lipid IV(A) biosynthesis; lipid IV(A) from (3R)-3-hydroxytetradecanoyl-[acyl-carrier-protein] and UDP-N-acetyl-alpha-D-glucosamine: step 6/6. Transfers the gamma-phosphate of ATP to the 4'-position of a tetraacyldisaccharide 1-phosphate intermediate (termed DS-1-P) to form tetraacyldisaccharide 1,4'-bis-phosphate (lipid IVA). The chain is Tetraacyldisaccharide 4'-kinase from Hahella chejuensis (strain KCTC 2396).